A 69-amino-acid polypeptide reads, in one-letter code: MPLTVKCPICKTPVEWAPQSEFKPFCSERCKLIDLADWASEKHAIPVKSEFDLDALDEFDLDEDAFFKE.

The Zn(2+) site is built by Cys7, Cys10, Cys26, and Cys30.

It belongs to the DNA gyrase inhibitor YacG family. As to quaternary structure, interacts with GyrB. It depends on Zn(2+) as a cofactor.

Inhibits all the catalytic activities of DNA gyrase by preventing its interaction with DNA. Acts by binding directly to the C-terminal domain of GyrB, which probably disrupts DNA binding by the gyrase. The protein is DNA gyrase inhibitor YacG of Shewanella sp. (strain W3-18-1).